The primary structure comprises 67 residues: Large ribosomal subunit protein bL35 (67 aa).

The protein belongs to the bacterial ribosomal protein bL35 family.

This Rhizobium etli (strain ATCC 51251 / DSM 11541 / JCM 21823 / NBRC 15573 / CFN 42) protein is Large ribosomal subunit protein bL35.